The chain runs to 457 residues: Ribosomal RNA-processing protein 8 (457 aa).

Residues 47–237 form a disordered region; sequence LEAASLSQQT…KSDSQESRAG (191 aa). Over residues 51 to 61 the composition is skewed to polar residues; it reads SLSQQTPSLPG. Phosphoserine is present on residues Ser-62, Ser-64, and Ser-105. Residues 129–138 show a composition bias toward basic and acidic residues; it reads GEEKGKRKCQ. Residues 139-183 are compositionally biased toward polar residues; the sequence is EYSSLHLTQPLDSVDQTVHNSRTSTATIDPSKPSPESMSPNSSHT. A phosphoserine mark is found at Ser-172 and Ser-177. A compositionally biased stretch (basic residues) spans 184–203; it reads LSRKQWRNRQKNKRRHKNKF. Residues His-282, Gly-317, Asp-335, Asp-347, Met-348, and Cys-364 each contribute to the S-adenosyl-L-methionine site.

This sequence belongs to the methyltransferase superfamily. RRP8 family. In terms of assembly, component of the eNoSC complex, composed of SIRT1, SUV39H1 and RRP8.

The protein localises to the nucleus. The protein resides in the nucleolus. Its function is as follows. Essential component of the eNoSC (energy-dependent nucleolar silencing) complex, a complex that mediates silencing of rDNA in response to intracellular energy status and acts by recruiting histone-modifying enzymes. The eNoSC complex is able to sense the energy status of cell: upon glucose starvation, elevation of NAD(+)/NADP(+) ratio activates SIRT1, leading to histone H3 deacetylation followed by dimethylation of H3 at 'Lys-9' (H3K9me2) by SUV39H1 and the formation of silent chromatin in the rDNA locus. In the complex, RRP8 binds to H3K9me2 and probably acts as a methyltransferase. Its substrates are however unknown. This chain is Ribosomal RNA-processing protein 8 (Rrp8), found in Mus musculus (Mouse).